The primary structure comprises 445 residues: Phosphoglucosamine mutase (445 aa).

Ser102 serves as the catalytic Phosphoserine intermediate. Mg(2+) is bound by residues Ser102, Asp241, Asp243, and Asp245. At Ser102 the chain carries Phosphoserine.

The protein belongs to the phosphohexose mutase family. Mg(2+) is required as a cofactor. Activated by phosphorylation.

The catalysed reaction is alpha-D-glucosamine 1-phosphate = D-glucosamine 6-phosphate. Catalyzes the conversion of glucosamine-6-phosphate to glucosamine-1-phosphate. In Enterobacter sp. (strain 638), this protein is Phosphoglucosamine mutase.